The chain runs to 277 residues: MKKAPAGSFPAKPTIAPERPILVFDSGIGGLTVLREARVVMPDRRFVYIADDAGFPYGNWEEEALKRRIIELFGEFIANYDPEIAVIACNTASTLVLEDLRRAYPSVPFVGTVPAIKPAAERTSSGLVSVLATPGTVKRAYTRDLIQSFASRCHVRLVGADGLAAIAEAHIRGESFDEALVMAQIAPCFIEKDGKRTDIVVLACTHYPFLVNVLRRLAPWPVDWLDPAEAIARRMKSLLPARSDDDEFHSQDDLAFFTSRKPDYAIRRLMQGFGLRF.

Substrate is bound by residues 25–26 (DS) and 57–58 (YG). The active-site Proton donor/acceptor is the Cys89. Residue 90-91 (NT) coordinates substrate. The active-site Proton donor/acceptor is Cys204. 205–206 (TH) is a binding site for substrate.

The protein belongs to the aspartate/glutamate racemases family.

It catalyses the reaction L-glutamate = D-glutamate. The protein operates within cell wall biogenesis; peptidoglycan biosynthesis. Provides the (R)-glutamate required for cell wall biosynthesis. The protein is Glutamate racemase of Brucella abortus (strain 2308).